A 251-amino-acid polypeptide reads, in one-letter code: 5'-nucleotidase SurE (251 aa).

The a divalent metal cation site is built by aspartate 8, aspartate 9, serine 39, and asparagine 95.

It belongs to the SurE nucleotidase family. The cofactor is a divalent metal cation.

The protein resides in the cytoplasm. It catalyses the reaction a ribonucleoside 5'-phosphate + H2O = a ribonucleoside + phosphate. Its function is as follows. Nucleotidase that shows phosphatase activity on nucleoside 5'-monophosphates. The polypeptide is 5'-nucleotidase SurE (Clostridium botulinum (strain Alaska E43 / Type E3)).